A 172-amino-acid polypeptide reads, in one-letter code: Translocator protein 2 (172 aa).

5 helical membrane passes run 3 to 23, 45 to 65, 80 to 100, 104 to 124, and 130 to 150; these read PQGAIFVALPHLGPILVSLLT, VLLAGWITIYFVMGYASYLVW, LGLYAVQLAVSWAVLIFFFAA, GLALLHMLLLYGLVVSTALIW, and LAAVLLLPYLAWLTVTASIAY.

The protein belongs to the TspO/BZRP family. In terms of assembly, homotetramer. May also form homodimer. As to expression, expressed in erythrocytes (at protein level).

The protein resides in the endoplasmic reticulum membrane. Its subcellular location is the cell membrane. Functionally, cholesterol-binding protein involved in the redistribution of cholesterol from lipid droplets to the endoplasmic reticulum. Required to meet cholesterol demands during erythropoietic differentiation. May play a role in transport processes at the plasma membrane of erythrocytes, including regulating VDAC-mediated ATP export, and import of the heme precursors protoporphyrin IX and 5-aminolevulinic acid. The sequence is that of Translocator protein 2 from Canis lupus familiaris (Dog).